A 549-amino-acid polypeptide reads, in one-letter code: Oxygen-dependent choline dehydrogenase (549 aa).

4–33 lines the FAD pocket; the sequence is DFVIIGSGSAGSALAYRLSEDGRNSVIVLE. Histidine 465 acts as the Proton acceptor in catalysis.

It belongs to the GMC oxidoreductase family. The cofactor is FAD.

The protein localises to the cell membrane. The catalysed reaction is choline + A = betaine aldehyde + AH2. It carries out the reaction betaine aldehyde + NAD(+) + H2O = glycine betaine + NADH + 2 H(+). It participates in amine and polyamine biosynthesis; betaine biosynthesis via choline pathway; betaine aldehyde from choline (cytochrome c reductase route): step 1/1. Involved in the biosynthesis of the osmoprotectant glycine betaine. Catalyzes the oxidation of choline to betaine aldehyde and betaine aldehyde to glycine betaine at the same rate. In Rhizobium meliloti (strain 1021) (Ensifer meliloti), this protein is Oxygen-dependent choline dehydrogenase.